A 137-amino-acid polypeptide reads, in one-letter code: Basic phospholipase A2 homolog 4a (137 aa).

Residues 1–16 (MRTLWIVTVLLVGVEG) form the signal peptide. Disulfide bonds link C42–C131, C44–C60, C59–C111, C65–C137, C66–C104, C73–C97, and C91–C102. The important for membrane-damaging activities in eukaryotes and bacteria; heparin-binding stretch occupies residues 121-133 (KKYKIYPKFFCKK).

Belongs to the phospholipase A2 family. Group II subfamily. K49 sub-subfamily. In terms of assembly, homodimer; non-covalently linked. In terms of tissue distribution, expressed by the venom gland.

It is found in the secreted. In terms of biological role, snake venom phospholipase A2 homolog that lacks enzymatic activity. Is myotoxic and displays edema-inducing activities. A model of myotoxic mechanism has been proposed: an apo Lys49-PLA2 is activated by the entrance of a hydrophobic molecule (e.g. fatty acid) at the hydrophobic channel of the protein leading to a reorientation of a monomer. This reorientation causes a transition between 'inactive' to 'active' states, causing alignment of C-terminal and membrane-docking sites (MDoS) side-by-side and putting the membrane-disruption sites (MDiS) in the same plane, exposed to solvent and in a symmetric position for both monomers. The MDoS region stabilizes the toxin on membrane by the interaction of charged residues with phospholipid head groups. Subsequently, the MDiS region destabilizes the membrane with penetration of hydrophobic residues. This insertion causes a disorganization of the membrane, allowing an uncontrolled influx of ions (i.e. calcium and sodium), and eventually triggering irreversible intracellular alterations and cell death. The chain is Basic phospholipase A2 homolog 4a from Bothrops asper (Terciopelo).